Consider the following 541-residue polypeptide: Chaperonin GroEL (541 aa).

Residues 29-32 (TLGP), 86-90 (DGTTT), G413, 478-480 (NAA), and D494 contribute to the ATP site.

The protein belongs to the chaperonin (HSP60) family. In terms of assembly, forms a cylinder of 14 subunits composed of two heptameric rings stacked back-to-back. Interacts with the co-chaperonin GroES.

The protein resides in the cytoplasm. The enzyme catalyses ATP + H2O + a folded polypeptide = ADP + phosphate + an unfolded polypeptide.. Its function is as follows. Together with its co-chaperonin GroES, plays an essential role in assisting protein folding. The GroEL-GroES system forms a nano-cage that allows encapsulation of the non-native substrate proteins and provides a physical environment optimized to promote and accelerate protein folding. This Agathobacter rectalis (strain ATCC 33656 / DSM 3377 / JCM 17463 / KCTC 5835 / VPI 0990) (Eubacterium rectale) protein is Chaperonin GroEL.